A 335-amino-acid chain; its full sequence is GTPase Obg (335 aa).

Positions 4–162 constitute an Obg domain; it reads GNFVDYTKIY…ADIVLELKVL (159 aa). An OBG-type G domain is found at 163–332; sequence ADVGLVGFPN…LKDKLWAMLN (170 aa). GTP-binding positions include 169-176, 194-198, 216-219, 283-286, and 313-315; these read GFPNAGKS, FTTLK, DIPG, SKCD, and SSI. Mg(2+) is bound by residues Ser-176 and Thr-196.

Belongs to the TRAFAC class OBG-HflX-like GTPase superfamily. OBG GTPase family. As to quaternary structure, monomer. Requires Mg(2+) as cofactor.

The protein localises to the cytoplasm. In terms of biological role, an essential GTPase which binds GTP, GDP and possibly (p)ppGpp with moderate affinity, with high nucleotide exchange rates and a fairly low GTP hydrolysis rate. Plays a role in control of the cell cycle, stress response, ribosome biogenesis and in those bacteria that undergo differentiation, in morphogenesis control. This Flavobacterium psychrophilum (strain ATCC 49511 / DSM 21280 / CIP 103535 / JIP02/86) protein is GTPase Obg.